A 116-amino-acid chain; its full sequence is Aspartate 1-decarboxylase (116 aa).

Ser-25 (schiff-base intermediate with substrate; via pyruvic acid) is an active-site residue. Ser-25 carries the pyruvic acid (Ser) modification. Thr-57 provides a ligand contact to substrate. Catalysis depends on Tyr-58, which acts as the Proton donor. 73–75 (GPA) contacts substrate.

Belongs to the PanD family. In terms of assembly, heterooctamer of four alpha and four beta subunits. The cofactor is pyruvate. In terms of processing, is synthesized initially as an inactive proenzyme, which is activated by self-cleavage at a specific serine bond to produce a beta-subunit with a hydroxyl group at its C-terminus and an alpha-subunit with a pyruvoyl group at its N-terminus.

The protein resides in the cytoplasm. It catalyses the reaction L-aspartate + H(+) = beta-alanine + CO2. Its pathway is cofactor biosynthesis; (R)-pantothenate biosynthesis; beta-alanine from L-aspartate: step 1/1. Catalyzes the pyruvoyl-dependent decarboxylation of aspartate to produce beta-alanine. In Flavobacterium psychrophilum (strain ATCC 49511 / DSM 21280 / CIP 103535 / JIP02/86), this protein is Aspartate 1-decarboxylase.